A 142-amino-acid polypeptide reads, in one-letter code: Large ribosomal subunit protein uL13 (142 aa).

This sequence belongs to the universal ribosomal protein uL13 family. As to quaternary structure, part of the 50S ribosomal subunit.

In terms of biological role, this protein is one of the early assembly proteins of the 50S ribosomal subunit, although it is not seen to bind rRNA by itself. It is important during the early stages of 50S assembly. The chain is Large ribosomal subunit protein uL13 from Saccharophagus degradans (strain 2-40 / ATCC 43961 / DSM 17024).